A 377-amino-acid chain; its full sequence is tRNA/tmRNA (uracil-C(5))-methyltransferase (377 aa).

5 residues coordinate S-adenosyl-L-methionine: Q199, Y227, N232, E248, and D308. The active-site Nucleophile is C333. Residue E367 is the Proton acceptor of the active site.

This sequence belongs to the class I-like SAM-binding methyltransferase superfamily. RNA M5U methyltransferase family. TrmA subfamily.

It carries out the reaction uridine(54) in tRNA + S-adenosyl-L-methionine = 5-methyluridine(54) in tRNA + S-adenosyl-L-homocysteine + H(+). It catalyses the reaction uridine(341) in tmRNA + S-adenosyl-L-methionine = 5-methyluridine(341) in tmRNA + S-adenosyl-L-homocysteine + H(+). Its function is as follows. Dual-specificity methyltransferase that catalyzes the formation of 5-methyluridine at position 54 (m5U54) in all tRNAs, and that of position 341 (m5U341) in tmRNA (transfer-mRNA). This is tRNA/tmRNA (uracil-C(5))-methyltransferase from Aeromonas hydrophila subsp. hydrophila (strain ATCC 7966 / DSM 30187 / BCRC 13018 / CCUG 14551 / JCM 1027 / KCTC 2358 / NCIMB 9240 / NCTC 8049).